A 392-amino-acid chain; its full sequence is Na(+)/H(+) antiporter NhaA 2 (392 aa).

A run of 11 helical transmembrane segments spans residues 20–40 (FFAA…AALI), 63–83 (VEHW…GLEI), 99–119 (ALPG…YVAF), 127–147 (IGGW…VLSL), 158–178 (IFLS…IALF), 181–201 (SDLS…LVAL), 209–229 (LLPY…SGIH), 265–285 (VAFA…LSGI), 298–318 (VALG…ALAI), 336–356 (GVAA…ALAF), and 365–385 (EVKV…VVVL).

It belongs to the NhaA Na(+)/H(+) (TC 2.A.33) antiporter family.

It localises to the cell inner membrane. The enzyme catalyses Na(+)(in) + 2 H(+)(out) = Na(+)(out) + 2 H(+)(in). Functionally, na(+)/H(+) antiporter that extrudes sodium in exchange for external protons. The protein is Na(+)/H(+) antiporter NhaA 2 of Pseudomonas savastanoi pv. phaseolicola (strain 1448A / Race 6) (Pseudomonas syringae pv. phaseolicola (strain 1448A / Race 6)).